The primary structure comprises 68 residues: Large ribosomal subunit protein uL29 (68 aa).

This sequence belongs to the universal ribosomal protein uL29 family.

This is Large ribosomal subunit protein uL29 (rpl29) from Pyrococcus abyssi (strain GE5 / Orsay).